The sequence spans 124 residues: MPTIQQLIRSAREKTDKKTKSPALKSCPQRRGVCTRVYTTTPKKPNSALRKVARVRLTSGFEVTAYIPGIGHNLQEHSVVMIRGGRVKDLPGVRYHIIRGTLDTAGVKDRRNGRSKYGAKRPKA.

Residues 8–28 form a disordered region; it reads IRSAREKTDKKTKSPALKSCP. Residues 10-19 show a composition bias toward basic and acidic residues; it reads SAREKTDKKT. Position 89 is a 3-methylthioaspartic acid (Asp-89).

Belongs to the universal ribosomal protein uS12 family. Part of the 30S ribosomal subunit. Contacts proteins S8 and S17. May interact with IF1 in the 30S initiation complex.

In terms of biological role, with S4 and S5 plays an important role in translational accuracy. Functionally, interacts with and stabilizes bases of the 16S rRNA that are involved in tRNA selection in the A site and with the mRNA backbone. Located at the interface of the 30S and 50S subunits, it traverses the body of the 30S subunit contacting proteins on the other side and probably holding the rRNA structure together. The combined cluster of proteins S8, S12 and S17 appears to hold together the shoulder and platform of the 30S subunit. In Arthrospira platensis (Spirulina platensis), this protein is Small ribosomal subunit protein uS12.